We begin with the raw amino-acid sequence, 364 residues long: Fructose-bisphosphate aldolase C (364 aa).

Position 5 is a phosphotyrosine (Tyr5). A phosphoserine mark is found at Ser36, Ser39, and Ser45. Arg56 provides a ligand contact to substrate. An N6-acetyllysine modification is found at Lys111. Ser132 carries the phosphoserine modification. A substrate-binding site is contributed by Lys147. Glu188 serves as the catalytic Proton acceptor. The active-site Schiff-base intermediate with dihydroxyacetone-P is Lys230.

This sequence belongs to the class I fructose-bisphosphate aldolase family. As to quaternary structure, homotetramer. Interacts with ATP6V1E1. May interact with PLD2.

The catalysed reaction is beta-D-fructose 1,6-bisphosphate = D-glyceraldehyde 3-phosphate + dihydroxyacetone phosphate. It participates in carbohydrate degradation; glycolysis; D-glyceraldehyde 3-phosphate and glycerone phosphate from D-glucose: step 4/4. This is Fructose-bisphosphate aldolase C (ALDOC) from Homo sapiens (Human).